We begin with the raw amino-acid sequence, 757 residues long: Protein hunchback (757 aa).

Disordered regions lie at residues 30 to 51 (EPGHHLDGNSVASSPRQSPIPS) and 171 to 213 (EKLQ…EDMK). A compositionally biased stretch (polar residues) spans 39–51 (SVASSPRQSPIPS). The segment covering 197 to 213 (EPEKEHDQMSNSSEDMK) has biased composition (basic and acidic residues). 4 C2H2-type zinc fingers span residues 239-261 (YKCKTCGVVAITKVDFWAHTRTH), 268-290 (LQCPKCPFVTEFKHHLEYHIRKH), 296-318 (FQCDKCSYTCVNKSMLNSHRKSH), and 324-348 (YRCADCDYATKYCHSFKLHLRKYGH). Disordered stretches follow at residues 367–416 (DVYG…VATS), 511–535 (EQLQQQNQQQSDNEEEDQDDEYERK), and 602–694 (MTSP…APPS). Composition is skewed to low complexity over residues 397–414 (VAAVAPQQQQSQPAQPVA) and 512–521 (QLQQQNQQQS). Positions 522 to 531 (DNEEEDQDDE) are enriched in acidic residues. The span at 651–694 (ANTSASSTASSSGNSSNASSNSNGNSSSNSSSNGTTSAVAAPPS) shows a compositional bias: low complexity. C2H2-type zinc fingers lie at residues 704-726 (YECKYCDIFFKDAVLYTIHMGYH) and 732-756 (FKCNMCGEKCDGPVGLFVHMARNAH).

Belongs to the hunchback C2H2-type zinc-finger protein family.

Its subcellular location is the nucleus. In terms of biological role, gap class segmentation protein that controls development of head structures. The chain is Protein hunchback (hb) from Drosophila sechellia (Fruit fly).